The primary structure comprises 104 residues: Large ribosomal subunit protein uL24 (104 aa).

The protein belongs to the universal ribosomal protein uL24 family. In terms of assembly, part of the 50S ribosomal subunit.

Functionally, one of two assembly initiator proteins, it binds directly to the 5'-end of the 23S rRNA, where it nucleates assembly of the 50S subunit. In terms of biological role, one of the proteins that surrounds the polypeptide exit tunnel on the outside of the subunit. The sequence is that of Large ribosomal subunit protein uL24 from Methylobacterium radiotolerans (strain ATCC 27329 / DSM 1819 / JCM 2831 / NBRC 15690 / NCIMB 10815 / 0-1).